Consider the following 478-residue polypeptide: Leukotoxin secretion protein D (478 aa).

The Cytoplasmic portion of the chain corresponds to 1-59 (MKIWLSGIYEFFLRYKNTWAEVWKIRKELDHPNRKKDESEFLPAHLDLIETPVSKKPRL). Residues 60 to 80 (IAYLIMLFLVVAIVLASVSKV) form a helical membrane-spanning segment. Topologically, residues 81–478 (EIVATAPGKL…ESVTESLRER (398 aa)) are periplasmic.

Belongs to the membrane fusion protein (MFP) (TC 8.A.1) family.

It is found in the cell inner membrane. Its function is as follows. Involved in the transport of the Leukotoxin. This chain is Leukotoxin secretion protein D (lktD), found in Mannheimia haemolytica (Pasteurella haemolytica).